Reading from the N-terminus, the 465-residue chain is Gamma-aminobutyric acid receptor subunit gamma-1 (465 aa).

Positions 1–35 (MGPLKAFLFSPFLLRSQSRGVRLVFLLLTLHLGNC) are cleaved as a signal peptide. At 36–273 (VDKADDEDDE…FDLSRRMGYF (238 aa)) the chain is on the extracellular side. N50 and N127 each carry an N-linked (GlcNAc...) asparagine glycan. Residues C188 and C202 are joined by a disulfide bond. N245 is a glycosylation site (N-linked (GlcNAc...) asparagine). Residues 274 to 294 (TIQTYIPCILTVVLSWVSFWI) traverse the membrane as a helical segment. At 295–300 (NKDAVP) the chain is on the cytoplasmic side. A helical membrane pass occupies residues 301 to 320 (ARTSLGITTVLTMTTLSTIA). The Extracellular segment spans residues 321–328 (RKSLPKVS). A helical transmembrane segment spans residues 329-349 (YVTAMDLFVSVCFIFVFAALM). The Cytoplasmic portion of the chain corresponds to 350–444 (EYGTLHYFTS…RIAKIDSYSR (95 aa)). The chain crosses the membrane as a helical span at residues 445 to 465 (IFFPTAFALFNLVYWVGYLYL).

The protein belongs to the ligand-gated ion channel (TC 1.A.9) family. Gamma-aminobutyric acid receptor (TC 1.A.9.5) subfamily. GABRG1 sub-subfamily. Heteropentamer, formed by a combination of alpha (GABRA1-6), beta (GABRB1-3), gamma (GABRG1-3), delta (GABRD), epsilon (GABRE), rho (GABRR1-3), pi (GABRP) and theta (GABRQ) chains, each subunit exhibiting distinct physiological and pharmacological properties. In terms of processing, may be palmitoylated.

It localises to the postsynaptic cell membrane. The protein resides in the cell membrane. It carries out the reaction chloride(in) = chloride(out). Gamma subunit of the heteropentameric ligand-gated chloride channel gated by gamma-aminobutyric acid (GABA), a major inhibitory neurotransmitter in the brain. GABA-gated chloride channels, also named GABA(A) receptors (GABAAR), consist of five subunits arranged around a central pore and contain GABA active binding site(s) located at the alpha and beta subunit interface(s). When activated by GABA, GABAARs selectively allow the flow of chloride anions across the cell membrane down their electrochemical gradient. Chloride influx into the postsynaptic neuron following GABAAR opening decreases the neuron ability to generate a new action potential, thereby reducing nerve transmission. The sequence is that of Gamma-aminobutyric acid receptor subunit gamma-1 from Homo sapiens (Human).